Reading from the N-terminus, the 248-residue chain is 3-deoxy-manno-octulosonate cytidylyltransferase (248 aa).

It belongs to the KdsB family.

The protein localises to the cytoplasm. The catalysed reaction is 3-deoxy-alpha-D-manno-oct-2-ulosonate + CTP = CMP-3-deoxy-beta-D-manno-octulosonate + diphosphate. It functions in the pathway nucleotide-sugar biosynthesis; CMP-3-deoxy-D-manno-octulosonate biosynthesis; CMP-3-deoxy-D-manno-octulosonate from 3-deoxy-D-manno-octulosonate and CTP: step 1/1. The protein operates within bacterial outer membrane biogenesis; lipopolysaccharide biosynthesis. Its function is as follows. Activates KDO (a required 8-carbon sugar) for incorporation into bacterial lipopolysaccharide in Gram-negative bacteria. This Citrobacter koseri (strain ATCC BAA-895 / CDC 4225-83 / SGSC4696) protein is 3-deoxy-manno-octulosonate cytidylyltransferase.